Here is an 843-residue protein sequence, read N- to C-terminus: Transmembrane protease serine 7 (843 aa).

Over 1–76 the chain is Cytoplasmic; that stretch reads MDKENSDVSA…KVPFWNVQNK (76 aa). Positions 27 to 67 are disordered; it reads AQKKLPVRRPPLPGRRLPLPGRRPPQRPIGKAKPKKQSKKK. The span at 56-67 shows a compositional bias: basic residues; it reads GKAKPKKQSKKK. A helical; Signal-anchor for type II membrane protein transmembrane segment spans residues 77-97; the sequence is IILFTVFLFILAVIAWTLLWL. Residues 98-843 are Extracellular-facing; it reads YISKTESKDA…WIHKYVPSLL (746 aa). The SEA domain occupies 106–234; sequence DAFYFAGMFR…DSVVLNAGLR (129 aa). Disulfide bonds link C247–C273, C299–C322, C365–C396, C484–C496, C491–C509, C503–C518, C525–C544, C538–C553, C559–C571, C566–C585, C579–C594, and C631–C647. 2 consecutive CUB domains span residues 247–360 and 365–481; these read CSQY…FEVI and CENT…YNIS. LDL-receptor class A domains follow at residues 483–519, 517–554, and 558–595; these read PCPVGSFRCSSGLCVPQAQRCDGVNDCFDESDELFCV, FCVSPQPACNTSSFRQHGPLICDGFRDCENGRDEQNCT, and PCNNRTFKCGNDICFRKQNAKCDGTVDCPDGSDEEGCT. The Peptidase S1 domain occupies 606–840; the sequence is IIGGTDTLEG…FVPWIHKYVP (235 aa). Residues H646 and D694 each act as charge relay system in the active site. Cystine bridges form between C730–C796 and C762–C775. S790 serves as the catalytic Charge relay system.

It belongs to the peptidase S1 family. Forms a heterodimer with SERPINA5. N-glycosylated. In terms of tissue distribution, expressed in brain, ovary, testis, salivary gland, trachea and lung.

Its subcellular location is the cell membrane. Serine protease which preferentially hydrolyzes peptides with Arg at the P1 position. This chain is Transmembrane protease serine 7 (TMPRSS7), found in Homo sapiens (Human).